Consider the following 1485-residue polypeptide: Chromosome partition protein MukB (1485 aa).

Position 34–41 (34–41 (GGNGAGKS)) interacts with ATP. 6 coiled-coil regions span residues 337–480 (LNLV…QAYQ), 509–605 (QHLA…PVWL), 780–805 (RAARENRLETLYQERDRLAERYATLS), 835–915 (EAEI…IQQH), 977–1116 (GMLT…AKAG), and 1210–1235 (EAIEQMEIELGRLTEELTAREQKLAI). Residues 666–783 (PSGAEDARLI…EVPLFGRAAR (118 aa)) form a flexible hinge region.

It belongs to the SMC family. MukB subfamily. In terms of assembly, homodimerization via its hinge domain. Binds to DNA via its C-terminal region. Interacts, and probably forms a ternary complex, with MukE and MukF via its C-terminal region. The complex formation is stimulated by calcium or magnesium. Interacts with tubulin-related protein FtsZ.

It is found in the cytoplasm. It localises to the nucleoid. Its function is as follows. Plays a central role in chromosome condensation, segregation and cell cycle progression. Functions as a homodimer, which is essential for chromosome partition. Involved in negative DNA supercoiling in vivo, and by this means organize and compact chromosomes. May achieve or facilitate chromosome segregation by condensation DNA from both sides of a centrally located replisome during cell division. The chain is Chromosome partition protein MukB from Yersinia pestis bv. Antiqua (strain Antiqua).